The following is a 148-amino-acid chain: Small ribosomal subunit protein uS13 (148 aa).

This sequence belongs to the universal ribosomal protein uS13 family. As to quaternary structure, part of the 30S ribosomal subunit. Forms a loose heterodimer with protein S19. Forms two bridges to the 50S subunit in the 70S ribosome.

Located at the top of the head of the 30S subunit, it contacts several helices of the 16S rRNA. In the 70S ribosome it contacts the 23S rRNA (bridge B1a) and protein L5 of the 50S subunit (bridge B1b), connecting the 2 subunits; these bridges are implicated in subunit movement. This Pyrococcus horikoshii (strain ATCC 700860 / DSM 12428 / JCM 9974 / NBRC 100139 / OT-3) protein is Small ribosomal subunit protein uS13.